The primary structure comprises 404 residues: Probable tRNA sulfurtransferase (404 aa).

The 106-residue stretch at Thr-60 to Thr-165 folds into the THUMP domain. ATP contacts are provided by residues Met-183 to Leu-184, His-208 to Phe-209, Arg-265, Gly-287, and Gln-296.

This sequence belongs to the ThiI family.

The protein localises to the cytoplasm. The enzyme catalyses [ThiI sulfur-carrier protein]-S-sulfanyl-L-cysteine + a uridine in tRNA + 2 reduced [2Fe-2S]-[ferredoxin] + ATP + H(+) = [ThiI sulfur-carrier protein]-L-cysteine + a 4-thiouridine in tRNA + 2 oxidized [2Fe-2S]-[ferredoxin] + AMP + diphosphate. The catalysed reaction is [ThiS sulfur-carrier protein]-C-terminal Gly-Gly-AMP + S-sulfanyl-L-cysteinyl-[cysteine desulfurase] + AH2 = [ThiS sulfur-carrier protein]-C-terminal-Gly-aminoethanethioate + L-cysteinyl-[cysteine desulfurase] + A + AMP + 2 H(+). Its pathway is cofactor biosynthesis; thiamine diphosphate biosynthesis. Catalyzes the ATP-dependent transfer of a sulfur to tRNA to produce 4-thiouridine in position 8 of tRNAs, which functions as a near-UV photosensor. Also catalyzes the transfer of sulfur to the sulfur carrier protein ThiS, forming ThiS-thiocarboxylate. This is a step in the synthesis of thiazole, in the thiamine biosynthesis pathway. The sulfur is donated as persulfide by IscS. The sequence is that of Probable tRNA sulfurtransferase from Streptococcus pneumoniae serotype 19F (strain G54).